The chain runs to 342 residues: DNA-directed RNA polymerase subunit alpha (342 aa).

The tract at residues methionine 1 to glutamine 239 is alpha N-terminal domain (alpha-NTD). An alpha C-terminal domain (alpha-CTD) region spans residues isoleucine 254–tyrosine 342.

This sequence belongs to the RNA polymerase alpha chain family. Homodimer. The RNAP catalytic core consists of 2 alpha, 1 beta, 1 beta' and 1 omega subunit. When a sigma factor is associated with the core the holoenzyme is formed, which can initiate transcription.

The enzyme catalyses RNA(n) + a ribonucleoside 5'-triphosphate = RNA(n+1) + diphosphate. Functionally, DNA-dependent RNA polymerase catalyzes the transcription of DNA into RNA using the four ribonucleoside triphosphates as substrates. The sequence is that of DNA-directed RNA polymerase subunit alpha from Orientia tsutsugamushi (strain Ikeda) (Rickettsia tsutsugamushi).